A 45-amino-acid chain; its full sequence is uncharacterized protein (45 aa).

A helical transmembrane segment spans residues 15-37 (EVVGTLMAVLITFALVAVVFNFI).

The protein localises to the membrane. This is an uncharacterized protein from Archaeoglobus fulgidus (strain ATCC 49558 / DSM 4304 / JCM 9628 / NBRC 100126 / VC-16).